We begin with the raw amino-acid sequence, 461 residues long: Xyloglucan 6-xylosyltransferase 2 (461 aa).

Residues 1 to 20 are Cytoplasmic-facing; the sequence is MIERCLGAYRCRRIQRALRQ. Residues 21–40 traverse the membrane as a helical; Signal-anchor for type II membrane protein segment; the sequence is LKVTILCLLLTVVVLRSTIG. The Lumenal segment spans residues 41–461; sequence AGKFGTPEQD…KAVKVQTNQV (421 aa). A disordered region spans residues 74 to 95; the sequence is QTGGDSSSGDGGGNSGGSNNYE. N-linked (GlcNAc...) asparagine glycosylation is present at N432.

The protein belongs to the glycosyltransferase 34 family. Homodimer. Interacts with XXT1 and XXT5. Interacts with FUT1 and XLT2.

It is found in the golgi apparatus membrane. It catalyses the reaction Transfers an alpha-D-xylosyl residue from UDP-D-xylose to a glucose residue in xyloglucan, forming an alpha-(1-&gt;6)-D-xylosyl-D-glucose linkage.. Its function is as follows. Xylosyltransferase specific to UDP-D-xylose that accepts both cellopentaose and cellohexaose as substrates, with a better use of cellohexaose, to produce xyloglucan. Adds preferentially the first xylosyl residue to the fourth glucosyl residue from the reducing end of both acceptors. Transfer one xylose mainly to the second glucose residue from the non-reducing end. The acceptor should have a minimum of four glucose residues. Associates with other xyloglucan-synthesizing enzymes to form multiprotein complexes for xyloglucan synthesis in the Golgi. The chain is Xyloglucan 6-xylosyltransferase 2 (XXT2) from Arabidopsis thaliana (Mouse-ear cress).